We begin with the raw amino-acid sequence, 188 residues long: Oleosin S2-2 (188 aa).

Residue alanine 2 is modified to N-acetylalanine. Residues 2-51 (ATVERRVQVDPTDKRIHLQPQYEGDVGYGYGYGGRADYKSSGPSSNQIVA) are polar. 3 helical membrane passes run 49 to 69 (IVALIVGVPVGGSLLALAGLT), 74 to 94 (VIGLMLSVPLFLLFSPVIVPA), and 96 to 116 (ITIGLAVTAILASGLFGLTGL). The segment at 52–125 (LIVGVPVGGS…LSSVSWVLNY (74 aa)) is hydrophobic. Residues 164–188 (DKAHEAHDTSLTTETTEPGKTRRHT) are disordered. Over residues 172–181 (TSLTTETTEP) the composition is skewed to polar residues.

It belongs to the oleosin family.

The protein localises to the lipid droplet. Its subcellular location is the membrane. Functionally, may have a structural role to stabilize the lipid body during desiccation of the seed by preventing coalescence of the oil. Probably interacts with both lipid and phospholipid moieties of lipid bodies. May also provide recognition signals for specific lipase anchorage in lipolysis during seedling growth. The chain is Oleosin S2-2 (S2) from Brassica napus (Rape).